Consider the following 192-residue polypeptide: ATP-dependent Clp protease proteolytic subunit 1 (192 aa).

Ser-92 (nucleophile) is an active-site residue. Residue His-117 is part of the active site.

This sequence belongs to the peptidase S14 family. In terms of assembly, fourteen ClpP subunits assemble into 2 heptameric rings which stack back to back to give a disk-like structure with a central cavity, resembling the structure of eukaryotic proteasomes.

The protein localises to the cytoplasm. The catalysed reaction is Hydrolysis of proteins to small peptides in the presence of ATP and magnesium. alpha-casein is the usual test substrate. In the absence of ATP, only oligopeptides shorter than five residues are hydrolyzed (such as succinyl-Leu-Tyr-|-NHMec, and Leu-Tyr-Leu-|-Tyr-Trp, in which cleavage of the -Tyr-|-Leu- and -Tyr-|-Trp bonds also occurs).. In terms of biological role, cleaves peptides in various proteins in a process that requires ATP hydrolysis. Has a chymotrypsin-like activity. Plays a major role in the degradation of misfolded proteins. The sequence is that of ATP-dependent Clp protease proteolytic subunit 1 from Chlamydia abortus (strain DSM 27085 / S26/3) (Chlamydophila abortus).